Reading from the N-terminus, the 808-residue chain is Beta-catenin/armadillo-related protein 1 (808 aa).

The segment at 1–85 (MDLDPNLVIN…SSHLSGMSSM (85 aa)) is involved in transcriptional activation. ARM repeat units lie at residues 118–160 (RAIP…NETK), 165–209 (CVIF…RAIS), and 369–408 (SDVP…NLVA). The tract at residues 541-808 (NVQDVIEGVR…DQYPYRQGRF (268 aa)) is involved in transcriptional activation. The segment at 702-808 (TYEGAGEQWS…DQYPYRQGRF (107 aa)) is disordered. Over residues 723 to 736 (YCNSSGRDSSKTYN) the composition is skewed to polar residues. Positions 737-750 (SPMYHSPPSMYPEY) are enriched in low complexity. Polar residues predominate over residues 786 to 798 (NIPSNQGPSSHLS).

The protein belongs to the beta-catenin family. In terms of assembly, interacts with apr-1, axl-1, daf-16, lin-23, and pop-1 (via acidic region in N-terminus 1-44). Interacts (via ARM repeats) with pry-1.

The protein resides in the cytoplasm. The protein localises to the nucleus. It is found in the membrane. Its subcellular location is the cell junction. Functionally, participates in the Wnt signaling pathway which affects cell fate and may regulate the stem cell divisions of seam cells during larval development. Functions as a transcriptional activator but is dependent on the interaction with pop-1. Involved in maintaining lin-39 Hox expression and regulating glr-1 abundance at the synapses. Required for mab-5 expression during Q neuroblast migration and for oxidative stress-induced daf-16 signaling. Has roles in egg laying, vulva precursor cell fate determination, Q neuroblast migration, posterior ectodermal cell P12 specification, movement, body length, male tail development and dauer induction. Functionally redundant to wrm-1 and hmp-2. This Caenorhabditis briggsae protein is Beta-catenin/armadillo-related protein 1 (bar-1).